The primary structure comprises 59 residues: UPF0181 protein CKO_01169 (59 aa).

The protein belongs to the UPF0181 family.

This chain is UPF0181 protein CKO_01169, found in Citrobacter koseri (strain ATCC BAA-895 / CDC 4225-83 / SGSC4696).